Reading from the N-terminus, the 115-residue chain is Translation initiation factor 1A 2 (115 aa).

The interval 1-34 (MANYRSTIRHRNSGSRKSVSGDTHEVTRVRTPQK) is disordered. A compositionally biased stretch (basic and acidic residues) spans 22 to 34 (DTHEVTRVRTPQK). The S1-like domain occupies 27–101 (TRVRTPQKDR…SKADVTWKYT (75 aa)).

It belongs to the eIF-1A family.

Seems to be required for maximal rate of protein biosynthesis. Enhances ribosome dissociation into subunits and stabilizes the binding of the initiator Met-tRNA(I) to 40 S ribosomal subunits. This Methanosarcina barkeri (strain Fusaro / DSM 804) protein is Translation initiation factor 1A 2.